The sequence spans 130 residues: Small ribosomal subunit protein uS8 (130 aa).

Belongs to the universal ribosomal protein uS8 family. In terms of assembly, part of the 30S ribosomal subunit. Contacts proteins S5 and S12.

Its function is as follows. One of the primary rRNA binding proteins, it binds directly to 16S rRNA central domain where it helps coordinate assembly of the platform of the 30S subunit. This Vibrio vulnificus (strain CMCP6) protein is Small ribosomal subunit protein uS8.